A 628-amino-acid polypeptide reads, in one-letter code: Leucine-rich repeat and fibronectin type-III domain-containing protein 3 (628 aa).

A signal peptide spans 1–16 (MAVLPLLLCLLPLAPA). Residues 17-540 (SSPPQPASPS…APHAPFLGGT (524 aa)) are Extracellular-facing. An LRRNT domain is found at 19 to 59 (PPQPASPSPCPRRCRCQTQSLPLSVLCPGAGLLFVPPSLDR). 7 LRR repeats span residues 60–83 (RAAE…ANMT), 84–105 (GLLH…AFSD), 108–129 (ALRA…QLRG), 132–153 (NLRH…ALDD), 157–178 (TLED…ALGR), 181–202 (NVNT…AFSR), and 205–226 (KLAR…PLFS). Positions 249–295 (NPLHCNCELVWLRRLAREDDLEACASPPALGGRYFWAVGEEEFVCEP) constitute an LRRCT domain. One can recognise an Ig-like domain in the interval 295 to 382 (PPVVTHRSPP…GEATAAVELT (88 aa)). A disulfide bridge links C317 with C366. 2 N-linked (GlcNAc...) asparagine glycosylation sites follow: N348 and N393. Residues 380 to 433 (ELTVGPPPPPQLANSTSCDPPRDGEPDALTPPSAASASASAKAAEAGPPTDRGV) form a disordered region. Residues 410–428 (PPSAASASASAKAAEAGPP) show a composition bias toward low complexity. The Fibronectin type-III domain occupies 427-525 (PPTDRGVQVT…GCNRFSTEPA (99 aa)). A helical membrane pass occupies residues 541–561 (MIIALGGVIVASVLVFIFVLL). At 562 to 628 (MRYKVHGGQP…WGPSHEPMGP (67 aa)) the chain is on the cytoplasmic side. The disordered stretch occupies residues 570–609 (QPPGKTKASAPVSSVCSQTNGALGPMPAPPAPEPSAPRAH). The segment covering 580–590 (PVSSVCSQTNG) has biased composition (polar residues). Residues 595–604 (MPAPPAPEPS) are compositionally biased toward pro residues.

Belongs to the LRFN family. As to quaternary structure, can form heteromeric complexes with LRFN1, LRFN2, LRFN4 and LRFN5. Able to form homomeric complexes across cell junctions, between adjacent cells. Does not interact with DLG4. In terms of processing, N-glycosylated.

It is found in the cell membrane. Its subcellular location is the cell projection. It localises to the axon. The protein localises to the dendrite. The protein resides in the synapse. It is found in the presynaptic cell membrane. Its subcellular location is the postsynaptic cell membrane. Functionally, cell adhesion molecule that mediates homophilic cell-cell adhesion in a Ca(2+)-independent manner. Promotes neurite outgrowth in hippocampal neurons. This is Leucine-rich repeat and fibronectin type-III domain-containing protein 3 (LRFN3) from Bos taurus (Bovine).